A 306-amino-acid chain; its full sequence is Palmitoyl-protein thioesterase ABHD10, mitochondrial (306 aa).

Residues 1–52 constitute a mitochondrion transit peptide; the sequence is MAVARLAAVAAWVPCRSWGCAAVPFGPHRGLSALLARIPQRAPRWLPACRQK. Positions 78 to 177 constitute an AB hydrolase-1 domain; it reads IIFIPGYLSY…KVVALLGVAT (100 aa). Catalysis depends on charge relay system residues serine 152, aspartate 249, and histidine 279.

The protein belongs to the AB hydrolase superfamily.

Its subcellular location is the mitochondrion. It catalyses the reaction S-hexadecanoyl-L-cysteinyl-[protein] + H2O = L-cysteinyl-[protein] + hexadecanoate + H(+). The catalysed reaction is mycophenolic acid O-acyl-beta-D-glucuronide + H2O = mycophenolate + D-glucuronate + H(+). With respect to regulation, inhibited by palmostatin-B. Acts as an acyl-protein thioesterase that hydrolyzes fatty acids from acylated residues in proteins. Regulates the mitochondrial S-depalmitoylation of the nucleophilic active site residue of peroxiredoxin-5/PRDX5, a key antioxidant protein, therefore modulating mitochondrial antioxidant ability. Also catalyzes the deglucuronidation of mycophenolic acid acyl-glucuronide, an active metabolite of the immunosuppressant drug mycophenolate. The polypeptide is Palmitoyl-protein thioesterase ABHD10, mitochondrial (ABHD10) (Pongo abelii (Sumatran orangutan)).